The following is a 325-amino-acid chain: Transaldolase (325 aa).

Lysine 125 serves as the catalytic Schiff-base intermediate with substrate.

It belongs to the transaldolase family. Type 2 subfamily.

It localises to the cytoplasm. The enzyme catalyses D-sedoheptulose 7-phosphate + D-glyceraldehyde 3-phosphate = D-erythrose 4-phosphate + beta-D-fructose 6-phosphate. It functions in the pathway carbohydrate degradation; pentose phosphate pathway; D-glyceraldehyde 3-phosphate and beta-D-fructose 6-phosphate from D-ribose 5-phosphate and D-xylulose 5-phosphate (non-oxidative stage): step 2/3. Its function is as follows. Transaldolase is important for the balance of metabolites in the pentose-phosphate pathway. This Campylobacter jejuni subsp. jejuni serotype O:23/36 (strain 81-176) protein is Transaldolase.